We begin with the raw amino-acid sequence, 287 residues long: Damage-control phosphatase PH1575 (287 aa).

Positions Cys-7–Cys-10 match the Subfamily I CxxC motif motif. The Mn(2+) site is built by Asp-156, Asn-157, and Asp-191. The Subfamily I GNFE motif motif lies at Gly-243–Glu-246. The Subfamily I KC motif motif lies at Lys-263 to Cys-264.

This sequence belongs to the damage-control phosphatase family. Nucleotides phosphatase I subfamily. It depends on Mn(2+) as a cofactor. The cofactor is Ni(2+). [2Fe-2S] cluster is required as a cofactor.

Its activity is regulated as follows. Activity is strongly promoted by Co(2+), Ni(2+), Mg(2+), Mn(2+), Ca(2+), Zn(2+) and Cu(2+). Activity is inhibited by EDTA. Metal-dependent phosphatase with probable damage-control functions. Shows phosphatase activity against p-nitrophenyl phosphate (pNPP), but natural substrates have not been identified yet. Low phosphatase activity against 8-oxo nucleotides suggests that it could hydrolyze oxidatively damaged purine nucleotides or their biosynthetic intermediates. In Pyrococcus horikoshii (strain ATCC 700860 / DSM 12428 / JCM 9974 / NBRC 100139 / OT-3), this protein is Damage-control phosphatase PH1575.